A 122-amino-acid chain; its full sequence is Large ribosomal subunit protein uL14 (122 aa).

This sequence belongs to the universal ribosomal protein uL14 family. Part of the 50S ribosomal subunit. Forms a cluster with proteins L3 and L19. In the 70S ribosome, L14 and L19 interact and together make contacts with the 16S rRNA in bridges B5 and B8.

Binds to 23S rRNA. Forms part of two intersubunit bridges in the 70S ribosome. The sequence is that of Large ribosomal subunit protein uL14 from Azoarcus sp. (strain BH72).